Here is a 677-residue protein sequence, read N- to C-terminus: Electrogenic aspartate/glutamate antiporter SLC25A12, mitochondrial (677 aa).

An N-acetylalanine modification is found at A2. The regulatory N-terminal domain stretch occupies residues 2–294 (AVKVHTTKRG…TLADIERIAP (293 aa)). Residues 2–329 (AVKVHTTKRG…WLQIAESAYR (328 aa)) lie on the Mitochondrial intermembrane side of the membrane. EF-hand domains are found at residues 40-85 (VQRY…SVLC), 86-121 (APDS…TIIH), 122-156 (HHIP…FLQE), and 157-192 (LQLE…IRSH). Residues D65, T67, D69, L71, and E76 each contribute to the Ca(2+) site. Positions 295–310 (LAEGALPYNLAELQRQ) are linker loop domain. Positions 320–612 (WLQIAESAYR…RWFYIDFGGL (293 aa)) are carrier domain. 3 Solcar repeats span residues 324-416 (AESA…VRDK), 424-508 (IPLP…CKLL), and 516-604 (VGGI…LQRW). The helical transmembrane segment at 330 to 347 (FTLGSVAGAVGATAVYPI) threads the bilayer. Over 348 to 390 (DLVKTRMQNQRGTGSVVGELMYKNSFDCFKKVLRYEGFFGLYR) the chain is Mitochondrial matrix. Residues 391–410 (GLIPQLIGVAPEKAIKLTVN) form a helical membrane-spanning segment. The Mitochondrial intermembrane segment spans residues 411–433 (DFVRDKFTKRDGSIPLPAEILAG). A helical membrane pass occupies residues 434 to 447 (GCAGGSQVIFTNPL). The Mitochondrial matrix portion of the chain corresponds to 448–482 (EIVKIRLQVAGEITTGPRVSALNVLQDLGLFGLYK). Residues 483–502 (GAKACFLRDIPFSAIYFPVY) traverse the membrane as a helical segment. The Mitochondrial intermembrane portion of the chain corresponds to 503 to 521 (AHCKLLLADENGRVGGINL). A helical transmembrane segment spans residues 522–539 (LTAGALAGVPAASLVTPA). Over 540–578 (DVIKTRLQVAARAGQTTYSGVVDCFRKILREEGPSAFWK) the chain is Mitochondrial matrix. Residues 579–598 (GTAARVFRSSPQFGVTLVTY) form a helical membrane-spanning segment. Topologically, residues 599–677 (ELLQRWFYID…AQPKAAAAAQ (79 aa)) are mitochondrial intermembrane. The interval 613 to 677 (KPSGSEPTPK…AQPKAAAAAQ (65 aa)) is C-terminal domain.

Belongs to the mitochondrial carrier (TC 2.A.29) family. Homodimer (via N-terminus).

It is found in the mitochondrion inner membrane. The enzyme catalyses L-aspartate(in) + L-glutamate(out) + H(+)(out) = L-aspartate(out) + L-glutamate(in) + H(+)(in). It catalyses the reaction 3-sulfino-L-alanine(out) + L-glutamate(in) + H(+)(in) = 3-sulfino-L-alanine(in) + L-glutamate(out) + H(+)(out). The catalysed reaction is 3-sulfino-L-alanine(out) + L-aspartate(in) = 3-sulfino-L-alanine(in) + L-aspartate(out). Functionally, mitochondrial electrogenic aspartate/glutamate antiporter that favors efflux of aspartate and entry of glutamate and proton within the mitochondria as part of the malate-aspartate shuttle. Also mediates the uptake of L-cysteinesulfinate (3-sulfino-L-alanine) by mitochondria in exchange of L-glutamate and proton. Can also exchange L-cysteinesulfinate with aspartate in their anionic form without any proton translocation. Lacks transport activity towards L-glutamine or gamma-aminobutyric acid (GABA). This is Electrogenic aspartate/glutamate antiporter SLC25A12, mitochondrial from Mus musculus (Mouse).